Here is a 454-residue protein sequence, read N- to C-terminus: NADP-specific glutamate dehydrogenase (454 aa).

Ser-2 is modified (N-acetylserine). Residue Lys-114 is part of the active site.

Belongs to the Glu/Leu/Phe/Val dehydrogenases family. In terms of assembly, homohexamer.

It catalyses the reaction L-glutamate + NADP(+) + H2O = 2-oxoglutarate + NH4(+) + NADPH + H(+). This Neurospora sitophila (Chrysonilia sitophila) protein is NADP-specific glutamate dehydrogenase (GDH).